A 93-amino-acid polypeptide reads, in one-letter code: Pyrimidine/purine nucleoside phosphorylase (93 aa).

Belongs to the nucleoside phosphorylase PpnP family.

The enzyme catalyses a purine D-ribonucleoside + phosphate = a purine nucleobase + alpha-D-ribose 1-phosphate. It carries out the reaction adenosine + phosphate = alpha-D-ribose 1-phosphate + adenine. The catalysed reaction is cytidine + phosphate = cytosine + alpha-D-ribose 1-phosphate. It catalyses the reaction guanosine + phosphate = alpha-D-ribose 1-phosphate + guanine. The enzyme catalyses inosine + phosphate = alpha-D-ribose 1-phosphate + hypoxanthine. It carries out the reaction thymidine + phosphate = 2-deoxy-alpha-D-ribose 1-phosphate + thymine. The catalysed reaction is uridine + phosphate = alpha-D-ribose 1-phosphate + uracil. It catalyses the reaction xanthosine + phosphate = alpha-D-ribose 1-phosphate + xanthine. Functionally, catalyzes the phosphorolysis of diverse nucleosides, yielding D-ribose 1-phosphate and the respective free bases. Can use uridine, adenosine, guanosine, cytidine, thymidine, inosine and xanthosine as substrates. Also catalyzes the reverse reactions. This chain is Pyrimidine/purine nucleoside phosphorylase, found in Pseudomonas syringae pv. tomato (strain ATCC BAA-871 / DC3000).